Consider the following 443-residue polypeptide: Glutamine synthetase (443 aa).

The region spanning 11–97 (VQVEVPRPRF…VYGYIYKGDE (87 aa)) is the GS beta-grasp domain. The GS catalytic domain maps to 103–443 (PRGILKRVLE…EWELERYFYV (341 aa)). Residues Glu-126 and Glu-128 each coordinate Mg(2+). Residue Glu-176 participates in ATP binding. Mg(2+) contacts are provided by Glu-181 and Glu-188. Gly-233 lines the L-glutamate pocket. Mg(2+) is bound at residue His-237. ATP is bound by residues 239–241 (HIS) and Ser-241. Residues Arg-287, Glu-293, and Arg-305 each contribute to the L-glutamate site. Arg-305 and Arg-310 together coordinate ATP. A Mg(2+)-binding site is contributed by Glu-322. Arg-324 is an L-glutamate binding site.

The protein belongs to the glutamine synthetase family. In terms of assembly, oligomer of 12 subunits arranged in the form of two hexagons. Mg(2+) serves as cofactor. The cofactor is Mn(2+).

It localises to the cytoplasm. It carries out the reaction L-glutamate + NH4(+) + ATP = L-glutamine + ADP + phosphate + H(+). The catalysed reaction is hydroxylamine + L-glutamate + ATP = L-glutamine hydroxamate + ADP + phosphate. The activity of this enzyme is not controlled by adenylation. Its function is as follows. Carries out the ATP-dependent synthesis of glutamine from ammonium nitrogen and glutamate. Exhibits both L-gamma-glutamylhydroxamate synthetase and gamma-glutamyltransferase activities when using hydroxylamine as substrate; in fact, the enzyme possesses low biosynthetic activity, suggesting that the reaction is biased towards the degradation of glutamine under ammonia-rich conditions. Might play some role in ammonia assimilation under ammonia-starvation conditions. Can also use GTP instead of ATP in the synthetase reaction, but not CTP or UTP. In Thermococcus kodakarensis (strain ATCC BAA-918 / JCM 12380 / KOD1) (Pyrococcus kodakaraensis (strain KOD1)), this protein is Glutamine synthetase.